A 228-amino-acid polypeptide reads, in one-letter code: Cytidylate kinase (228 aa).

G11–S19 is an ATP binding site.

It belongs to the cytidylate kinase family. Type 1 subfamily.

It localises to the cytoplasm. The catalysed reaction is CMP + ATP = CDP + ADP. The enzyme catalyses dCMP + ATP = dCDP + ADP. This Mycobacterium avium (strain 104) protein is Cytidylate kinase.